The following is a 1025-amino-acid chain: Multidrug resistance protein MdtC (1025 aa).

Helical transmembrane passes span 3-23, 333-353, 360-380, 387-407, 431-451, 463-483, 528-548, 853-873, 875-895, 897-917, 953-973, and 984-1004; these read FFAL…AITL, EVEQ…FLFL, IIPA…MYLC, LSLM…IVVL, VGFT…PLLL, FAVT…TLTP, LVGA…ISIP, VILI…LYES, VHPL…LLAL, LFNA…IGIV, PIMM…LSGG, and ITIV…TPVV.

It belongs to the resistance-nodulation-cell division (RND) (TC 2.A.6) family. MdtC subfamily. As to quaternary structure, part of a tripartite efflux system composed of MdtA, MdtB and MdtC. MdtC forms a heteromultimer with MdtB.

It is found in the cell inner membrane. Functionally, the MdtABC tripartite complex confers resistance against novobiocin and deoxycholate. The protein is Multidrug resistance protein MdtC of Escherichia coli O81 (strain ED1a).